A 704-amino-acid chain; its full sequence is SH3KBP1-binding protein 1 (704 aa).

The residue at position 2 (Ala-2) is an N-acetylalanine. Residues Glu-19–Gly-88 form the BTB domain. The interval Leu-145–Pro-165 is disordered. The residue at position 163 (Thr-163) is a Phosphothreonine. 5 WD repeats span residues Arg-233–Glu-280, Val-283–Gln-322, Val-324–Lys-359, Val-428–Ser-466, and Leu-548–Gly-586. The segment covering Ala-611–Ser-644 has biased composition (low complexity). The disordered stretch occupies residues Ala-611 to Phe-704. Residues Pro-618–Arg-623 carry the PXXXPR motif. 2 positions are modified to phosphoserine: Ser-644 and Ser-646. Residues Pro-678–Arg-683 carry the PXXXPR motif.

Belongs to the KCTD3 family. Monomer. Interacts with CUL3; interaction is direct and forms a 5:5 heterodecamer. Interacts (via PXXXPR motifs) with SH3KBP1 (via SH3 domains). Directly interacts with cathepsin B/CTSB.

The protein localises to the lysosome. In terms of biological role, inhibits CBL-SH3KBP1 complex mediated down-regulation of EGFR signaling by sequestration of SH3KBP1. Binds to SH3KBP1 and prevents its interaction with CBL and inhibits translocation of SH3KBP1 to EGFR containing vesicles upon EGF stimulation. The protein is SH3KBP1-binding protein 1 (SHKBP1) of Bos taurus (Bovine).